A 180-amino-acid polypeptide reads, in one-letter code: NADH-quinone oxidoreductase subunit I (180 aa).

2 consecutive 4Fe-4S ferredoxin-type domains span residues 46-80 and 90-119; these read GRIVLTCDPDGYERCVACNLCAVACPVDCISLQKT and EFFRINFSRCIFCGLCEEACPTTAIQLTPD. The [4Fe-4S] cluster site is built by Cys-60, Cys-63, Cys-66, Cys-70, Cys-99, Cys-102, Cys-105, and Cys-109.

It belongs to the complex I 23 kDa subunit family. NDH-1 is composed of 14 different subunits. Subunits NuoA, H, J, K, L, M, N constitute the membrane sector of the complex. Requires [4Fe-4S] cluster as cofactor.

Its subcellular location is the cell membrane. It carries out the reaction a quinone + NADH + 5 H(+)(in) = a quinol + NAD(+) + 4 H(+)(out). Its function is as follows. NDH-1 shuttles electrons from NADH, via FMN and iron-sulfur (Fe-S) centers, to quinones in the respiratory chain. The immediate electron acceptor for the enzyme in this species is believed to be ubiquinone. Couples the redox reaction to proton translocation (for every two electrons transferred, four hydrogen ions are translocated across the cytoplasmic membrane), and thus conserves the redox energy in a proton gradient. The sequence is that of NADH-quinone oxidoreductase subunit I from Baumannia cicadellinicola subsp. Homalodisca coagulata.